A 332-amino-acid chain; its full sequence is Nucleoid-associated protein VVA0877 (332 aa).

The protein belongs to the YejK family.

It localises to the cytoplasm. The protein localises to the nucleoid. In Vibrio vulnificus (strain YJ016), this protein is Nucleoid-associated protein VVA0877.